A 329-amino-acid polypeptide reads, in one-letter code: Trem-like transcript 2 protein (329 aa).

An N-terminal signal peptide occupies residues 1–24 (MEPWPLTFLLLLLLLLWLQGCVSG). The region spanning 25-126 (HSNENLYRKV…HFYPLVGFQL (102 aa)) is the Ig-like V-type domain. Topologically, residues 25 to 270 (HSNENLYRKV…NRSQETYIPA (246 aa)) are extracellular. Disulfide bonds link C46-C110 and C61-C68. A disordered region spans residues 202-259 (FIDTSGTVTEPERNTESQPATLSPSNARSFSADPVTTSTMSRHQSSSLSTTGTCHPLT). Residues 217-259 (ESQPATLSPSNARSFSADPVTTSTMSRHQSSSLSTTGTCHPLT) are compositionally biased toward polar residues. N261 carries an N-linked (GlcNAc...) asparagine glycan. Residues 271–291 (MVVVLTFLPAPVVLVVAYGFW) traverse the membrane as a helical segment. Residues 292–329 (KKRHMGRYNLGSNYAKPWIHLPEGPETPWKPAWSKITQ) are Cytoplasmic-facing.

As to quaternary structure, interacts with CD276 and this interaction enhances T-cell activation. Detected in B-lymphocytes and macrophages. Detected in spleen, lymph nodes, blood, bone marrow and cells from the peritoneal cavity (at protein level).

It is found in the cell membrane. Functionally, cell surface receptor that may play a role in the innate and adaptive immune response. Acts as a counter-receptor for CD276 and interaction with CD276 on T-cells enhances T-cell activation. This chain is Trem-like transcript 2 protein (Treml2), found in Mus musculus (Mouse).